Consider the following 133-residue polypeptide: Small ribosomal subunit protein uS11 (133 aa).

This sequence belongs to the universal ribosomal protein uS11 family. As to quaternary structure, part of the 30S ribosomal subunit. Interacts with proteins S7 and S18. Binds to IF-3.

In terms of biological role, located on the platform of the 30S subunit, it bridges several disparate RNA helices of the 16S rRNA. Forms part of the Shine-Dalgarno cleft in the 70S ribosome. The chain is Small ribosomal subunit protein uS11 from Brevibacillus brevis (strain 47 / JCM 6285 / NBRC 100599).